The chain runs to 204 residues: Ribosome maturation factor RimP (204 aa).

The interval 177–204 (NFDESQFDEIQETEGEEADEAETPITRH) is disordered. Acidic residues predominate over residues 181-198 (SQFDEIQETEGEEADEAE).

It belongs to the RimP family.

The protein localises to the cytoplasm. In terms of biological role, required for maturation of 30S ribosomal subunits. In Cereibacter sphaeroides (strain ATCC 17025 / ATH 2.4.3) (Rhodobacter sphaeroides), this protein is Ribosome maturation factor RimP.